The sequence spans 221 residues: Deep sea actinoporin Cjtox II (221 aa).

The first 19 residues, 1–19 (MNRLIIVCLVAAMIYSTIA), serve as a signal peptide directing secretion. Residues 20–42 (LPMKEDISNDERPISVNEEPVKK) constitute a propeptide that is removed on maturation. Phosphocholine-binding residues include S96, V129, S147, P149, Y175, Y179, and Y180. Residues 147-162 (SVPYDYNWYENWWNIK) are trp-rich region, which is important for the binding to lipid membrane. Residues 186 to 188 (KGD) carry the Cell attachment site, crucial for protein stability motif.

The protein belongs to the actinoporin family. Sea anemone subfamily. In terms of assembly, octamer or nonamer in membranes. Monomer in the soluble state. Expressed in actinopharynx and in gastric filaments. Is not expressed in tentacles.

The protein resides in the secreted. It localises to the nematocyst. The protein localises to the target cell membrane. In terms of biological role, may be involved in digestion of prey. Pore-forming protein that forms cations-selective hydrophilic pores of around 1 nm and causes cytolysis. Pore formation is a multi-step process that involves specific recognition of membrane sphingomyelin (but neither cholesterol nor phosphatidylcholine) using aromatic rich region and adjacent phosphocholine (POC) binding site, firm binding to the membrane (mainly driven by hydrophobic interactions) accompanied by the transfer of the N-terminal region to the lipid-water interface and finally pore formation after oligomerization of monomers. Shows hemolytic activity on equine erythrocytes. Hemolysis is highly inhibited in presence of sphingomyelin, suggesting that this protein targets sphingomyelin. The protein is Deep sea actinoporin Cjtox II of Cribrinopsis japonica (Deep-sea anemone).